Reading from the N-terminus, the 274-residue chain is Thiamine kinase (274 aa).

This sequence belongs to the thiamine kinase family.

The enzyme catalyses thiamine + ATP = thiamine phosphate + ADP + H(+). The protein operates within cofactor biosynthesis; thiamine diphosphate biosynthesis; thiamine phosphate from thiamine: step 1/1. Its function is as follows. Catalyzes the ATP-dependent phosphorylation of thiamine to thiamine phosphate. Is involved in thiamine salvage. The sequence is that of Thiamine kinase from Salmonella typhimurium (strain LT2 / SGSC1412 / ATCC 700720).